The chain runs to 482 residues: Pyruvate kinase (482 aa).

A substrate-binding site is contributed by Arg37. K(+) is bound by residues Asn39, Ser41, and Asp71. ATP is bound at residue 39–42 (NFSH). 2 residues coordinate ATP: Arg78 and Lys160. Glu222 serves as a coordination point for Mg(2+). Residues Gly245, Asp246, and Thr278 each coordinate substrate. Asp246 is a Mg(2+) binding site.

The protein belongs to the pyruvate kinase family. As to quaternary structure, homotetramer. The cofactor is Mg(2+). It depends on K(+) as a cofactor.

It carries out the reaction pyruvate + ATP = phosphoenolpyruvate + ADP + H(+). The protein operates within carbohydrate degradation; glycolysis; pyruvate from D-glyceraldehyde 3-phosphate: step 5/5. The polypeptide is Pyruvate kinase (ttuE) (Agrobacterium vitis (Rhizobium vitis)).